The sequence spans 154 residues: 3-hydroxyacyl-[acyl-carrier-protein] dehydratase FabZ (154 aa).

His54 is an active-site residue.

This sequence belongs to the thioester dehydratase family. FabZ subfamily.

It is found in the cytoplasm. The catalysed reaction is a (3R)-hydroxyacyl-[ACP] = a (2E)-enoyl-[ACP] + H2O. Its function is as follows. Involved in unsaturated fatty acids biosynthesis. Catalyzes the dehydration of short chain beta-hydroxyacyl-ACPs and long chain saturated and unsaturated beta-hydroxyacyl-ACPs. This Shewanella baltica (strain OS223) protein is 3-hydroxyacyl-[acyl-carrier-protein] dehydratase FabZ.